Consider the following 538-residue polypeptide: MLADSYLIKFVLRQLQVQQDGDAQHLLMVFLGLLALVTLLQWLVRNYRELRKLPPGPWGLPVIGYLLFMGSEKHTRFMELAKQYGSLFSTRLGSQLTVVMSDYKMIRECFRREEFTGRPDTPFMQTLNGYGIINSTGKLWKDQRRFLHDKLRQFGMTYMGNGKQQMQKRIMTEVHEFIGHLHASDGQPVDMSPVISVAVSNVICSLMMSTRFSIDDPKFRRFNFLIEEGMRLFGEIHTVDYIPTMQCFPSISTAKNKIAQNRAEMQRFYQDVIDDHKRSFDPNNIRDLVDFYLCEIEKAKAEGTDAELFDGKNHEEQLVQVIIDLFSAGMETIKTTLLWINVFMLRNPKEMRRVQDELDQVVGRHRLPTIEDLQYLPITESTILESMRRSSIVPLATTHSPTRDVELNGYTIPAGSHVIPLINSVHMDPNLWEKPEEFRPSRFIDTEGKVRKPEYFIPFGVGRRMCLGDVLARMELFLFFASFMHCFDIALPEGQPLPSLKGNVGATITPESFKVCLKRRPLGPTAADPHHMRNVGAN.

A helical transmembrane segment spans residues 24–44 (QHLLMVFLGLLALVTLLQWLV). C466 provides a ligand contact to heme.

This sequence belongs to the cytochrome P450 family. The cofactor is heme. As to expression, expressed in body wall (epidermal and muscle cells) and mid- and hind-gut.

The protein localises to the endoplasmic reticulum membrane. Its subcellular location is the microsome membrane. Probably involved in steroid hormones biosynthesis. In Drosophila melanogaster (Fruit fly), this protein is Cytochrome P450 18a1 (Cyp18a1).